Here is a 33-residue protein sequence, read N- to C-terminus: Ice-structuring protein SS-3 (33 aa).

The protein belongs to the type-I AFP family.

Functionally, antifreeze proteins lower the blood freezing point. The polypeptide is Ice-structuring protein SS-3 (Myoxocephalus scorpius (Shorthorn sculpin)).